We begin with the raw amino-acid sequence, 124 residues long: Large ribosomal subunit protein bL21 (124 aa).

Residues 105–124 (TVKAEPKSKRAPAPEAAADA) form a disordered region. Positions 115 to 124 (APAPEAAADA) are enriched in low complexity.

Belongs to the bacterial ribosomal protein bL21 family. As to quaternary structure, part of the 50S ribosomal subunit. Contacts protein L20.

In terms of biological role, this protein binds to 23S rRNA in the presence of protein L20. In Xanthobacter autotrophicus (strain ATCC BAA-1158 / Py2), this protein is Large ribosomal subunit protein bL21.